We begin with the raw amino-acid sequence, 363 residues long: Protein-glutamate methylesterase/protein-glutamine glutaminase 1 (363 aa).

A Response regulatory domain is found at 7 to 124 (KVLIVDDSAL…SRGMQEYARE (118 aa)). Asp-58 carries the 4-aspartylphosphate modification. The CheB-type methylesterase domain occupies 164–356 (FSSTEKIIVI…RRLFGWLESQ (193 aa)). Residues Ser-176, His-202, and Asp-298 contribute to the active site.

The protein belongs to the CheB family. Phosphorylated by CheA. Phosphorylation of the N-terminal regulatory domain activates the methylesterase activity.

Its subcellular location is the cytoplasm. It carries out the reaction [protein]-L-glutamate 5-O-methyl ester + H2O = L-glutamyl-[protein] + methanol + H(+). It catalyses the reaction L-glutaminyl-[protein] + H2O = L-glutamyl-[protein] + NH4(+). Functionally, involved in chemotaxis. Part of a chemotaxis signal transduction system that modulates chemotaxis in response to various stimuli. Catalyzes the demethylation of specific methylglutamate residues introduced into the chemoreceptors (methyl-accepting chemotaxis proteins or MCP) by CheR. Also mediates the irreversible deamidation of specific glutamine residues to glutamic acid. This chain is Protein-glutamate methylesterase/protein-glutamine glutaminase 1, found in Geobacter metallireducens (strain ATCC 53774 / DSM 7210 / GS-15).